The chain runs to 508 residues: Lysine--tRNA ligase (508 aa).

2 residues coordinate Mg(2+): E418 and E425.

It belongs to the class-II aminoacyl-tRNA synthetase family. As to quaternary structure, homodimer. It depends on Mg(2+) as a cofactor.

The protein localises to the cytoplasm. The enzyme catalyses tRNA(Lys) + L-lysine + ATP = L-lysyl-tRNA(Lys) + AMP + diphosphate. This Burkholderia vietnamiensis (strain G4 / LMG 22486) (Burkholderia cepacia (strain R1808)) protein is Lysine--tRNA ligase.